The sequence spans 149 residues: 3-dehydroquinate dehydratase 2 (149 aa).

Residue tyrosine 24 is the Proton acceptor of the active site. Substrate-binding residues include asparagine 75, histidine 81, and aspartate 88. The active-site Proton donor is histidine 101. Residues 102 to 103 (LS) and arginine 112 contribute to the substrate site.

The protein belongs to the type-II 3-dehydroquinase family. Homododecamer.

It carries out the reaction 3-dehydroquinate = 3-dehydroshikimate + H2O. The protein operates within metabolic intermediate biosynthesis; chorismate biosynthesis; chorismate from D-erythrose 4-phosphate and phosphoenolpyruvate: step 3/7. In terms of biological role, catalyzes a trans-dehydration via an enolate intermediate. This is 3-dehydroquinate dehydratase 2 (aroQ2) from Pseudomonas putida (strain ATCC 47054 / DSM 6125 / CFBP 8728 / NCIMB 11950 / KT2440).